Here is an 81-residue protein sequence, read N- to C-terminus: Sulfur carrier protein TusA (81 aa).

Residue Cys-19 is the Cysteine persulfide intermediate of the active site.

The protein belongs to the sulfur carrier protein TusA family.

Its subcellular location is the cytoplasm. Sulfur carrier protein which probably makes part of a sulfur-relay system. The protein is Sulfur carrier protein TusA of Shewanella frigidimarina (strain NCIMB 400).